Here is a 95-residue protein sequence, read N- to C-terminus: Beta-alanine degradation protein BauB (95 aa).

The Cupin type-2 domain maps to 23–90 (WRFAPGAETG…NASAHEVVFV (68 aa)).

Its function is as follows. Involved in the degradation of beta-alanine. The chain is Beta-alanine degradation protein BauB (bauB) from Pseudomonas aeruginosa (strain ATCC 15692 / DSM 22644 / CIP 104116 / JCM 14847 / LMG 12228 / 1C / PRS 101 / PAO1).